A 186-amino-acid polypeptide reads, in one-letter code: Ribosome-recycling factor (186 aa).

Belongs to the RRF family.

The protein resides in the cytoplasm. In terms of biological role, responsible for the release of ribosomes from messenger RNA at the termination of protein biosynthesis. May increase the efficiency of translation by recycling ribosomes from one round of translation to another. This is Ribosome-recycling factor from Chlorobaculum parvum (strain DSM 263 / NCIMB 8327) (Chlorobium vibrioforme subsp. thiosulfatophilum).